The primary structure comprises 467 residues: Envelope glycoprotein M (467 aa).

Residues 1–32 (MGRRAPRGSPEAAPGADVAPGARAAWWVWCVQ) lie on the Intravirion side of the membrane. A helical membrane pass occupies residues 33 to 53 (VATFIVSAICVVGLLVLASVF). Topologically, residues 54-90 (RDRFPCLYAPATSYAKANATVEVRGGVAVPLRLDTQS) are virion surface. Residues 91–111 (LLATYAITSTLLLAAAVYAAV) traverse the membrane as a helical segment. Over 112-137 (GAVTSRYERALDAARRLAAARMAMPH) the chain is Intravirion. The helical transmembrane segment at 138–158 (ATLIAGNVCAWLLQITVLLLA) threads the bilayer. Residues 159 to 163 (HRISQ) are Virion surface-facing. The helical transmembrane segment at 164–184 (LAHLIYVLHFACLVYLAAHFC) threads the bilayer. Topologically, residues 185–220 (TRGVLSGTYLRQVHGLIDPAPTHHRIVGPVRAVMTN) are intravirion. The helical transmembrane segment at 221–241 (ALLLGTLLCTAAAAVSLNTIA) threads the bilayer. The Virion surface segment spans residues 242 to 250 (ALNFNFSAP). The helical transmembrane segment at 251 to 271 (SMLICLTTLFALLVVSLLLVV) threads the bilayer. Topologically, residues 272 to 280 (EGVLCHYVR) are intravirion. A helical transmembrane segment spans residues 281 to 301 (VLVGPHLGAIAATGIVGLACE). Over 302-318 (HYHTGGYYVVEQQWPGA) the chain is Virion surface. A helical membrane pass occupies residues 319–339 (QTGVRVALALVAAFALAMAVL). At 340-467 (RCTRAYLYHR…EPVYSTVRRW (128 aa)) the chain is on the intravirion side. Over residues 371–381 (RRVRSSMRGSR) the composition is skewed to basic residues. 2 disordered regions span residues 371 to 395 (RRVR…AETP) and 432 to 459 (VQRP…AGEP).

This sequence belongs to the herpesviridae glycoprotein M family. In terms of assembly, interacts (via N-terminus) with gN (via N-terminus). The gM-gN heterodimer forms the gCII complex.

The protein resides in the virion membrane. It localises to the host Golgi apparatus. The protein localises to the host trans-Golgi network. Its subcellular location is the host endosome membrane. It is found in the host nucleus inner membrane. In terms of biological role, envelope glycoprotein important for virion assembly and egress. Plays a role in the correct incorporation of gH-gL into virion membrane. Directs the glycoprotein N (gN) to the host trans-Golgi network. The polypeptide is Envelope glycoprotein M (Human herpesvirus 2 (strain HG52) (HHV-2)).